The primary structure comprises 301 residues: Probable alpha-L-glutamate ligase 1 (301 aa).

The ATP-grasp domain maps to 104–287 (LQLLSRKGIG…VTEPIVEYIE (184 aa)). ATP is bound by residues lysine 141, 178–179 (EY), aspartate 187, and 211–213 (RSN). 3 residues coordinate Mg(2+): aspartate 248, glutamate 260, and asparagine 262. Positions 248, 260, and 262 each coordinate Mn(2+).

It belongs to the RimK family. Mg(2+) is required as a cofactor. It depends on Mn(2+) as a cofactor.

This is Probable alpha-L-glutamate ligase 1 from Shewanella sp. (strain W3-18-1).